The following is a 513-amino-acid chain: ATP synthase subunit alpha (513 aa).

169–176 is a binding site for ATP; that stretch reads GDRQTGKT.

The protein belongs to the ATPase alpha/beta chains family. As to quaternary structure, F-type ATPases have 2 components, CF(1) - the catalytic core - and CF(0) - the membrane proton channel. CF(1) has five subunits: alpha(3), beta(3), gamma(1), delta(1), epsilon(1). CF(0) has three main subunits: a(1), b(2) and c(9-12). The alpha and beta chains form an alternating ring which encloses part of the gamma chain. CF(1) is attached to CF(0) by a central stalk formed by the gamma and epsilon chains, while a peripheral stalk is formed by the delta and b chains.

The protein resides in the cell inner membrane. The catalysed reaction is ATP + H2O + 4 H(+)(in) = ADP + phosphate + 5 H(+)(out). Its function is as follows. Produces ATP from ADP in the presence of a proton gradient across the membrane. The alpha chain is a regulatory subunit. The sequence is that of ATP synthase subunit alpha from Cupriavidus necator (strain ATCC 17699 / DSM 428 / KCTC 22496 / NCIMB 10442 / H16 / Stanier 337) (Ralstonia eutropha).